We begin with the raw amino-acid sequence, 105 residues long: MSILHDLAATIEARKGADPDSSWTAKLLAKGPEKCAEKFGEEAIEAIIEAVKGDRAKLVSEGADVLYHFLVMLAARDVALDDVLAELAHRQGQSGIAEKAARPKG.

This sequence belongs to the PRA-PH family.

The protein localises to the cytoplasm. The catalysed reaction is 1-(5-phospho-beta-D-ribosyl)-ATP + H2O = 1-(5-phospho-beta-D-ribosyl)-5'-AMP + diphosphate + H(+). It participates in amino-acid biosynthesis; L-histidine biosynthesis; L-histidine from 5-phospho-alpha-D-ribose 1-diphosphate: step 2/9. This Ruegeria pomeroyi (strain ATCC 700808 / DSM 15171 / DSS-3) (Silicibacter pomeroyi) protein is Phosphoribosyl-ATP pyrophosphatase.